Reading from the N-terminus, the 163-residue chain is UPF0134 protein MPN_139 (163 aa).

It belongs to the UPF0134 family.

The polypeptide is UPF0134 protein MPN_139 (Mycoplasma pneumoniae (strain ATCC 29342 / M129 / Subtype 1) (Mycoplasmoides pneumoniae)).